A 499-amino-acid polypeptide reads, in one-letter code: MNNQPVILAIDQGTTSTRAILFSATLEILAVQQKELKLHYPHKGWVEQNPEAIWQDTLEVCHAVLEHNVSMVGSVAAIGITNQRETTILWDRKTGKPVYPAIVWQDRRTDIGCEQLKAQGYEPMVTARTGLLFDPYFSATKIAWILDNVEGVRSRAMRGELAFGTVDCYLLWHLTGGKVHATDVTNAARTLLFNIVEQKWDADLLTLFNIPETILPEVRDNAARFGMTDRILFGRGIPIGGMAGDQHAALIGQRCFRPGMVKSTYGTGCFALMNIGSDFKPSQHRLLTTPAYRLNGKMVYAIEGSIFIAGAAIQWLRDELEFFQEVAASDALALSVPDSNEVYFVPAFTGLGAPYWRPDVRGMISGLSRDTTRVHIVRAALEAQGYQTRDLMAAIEEDGGHHAEIIRVDGGLVANKFMCQFLADILNKPVEVPKITEATALGAAILAGLTVDLFADLEVTGCYWQRDKIYTPTITETERERLYAGWKAAVQSLLHASRN.

Threonine 14 lines the ADP pocket. Threonine 14, threonine 15, and serine 16 together coordinate ATP. Threonine 14 lines the sn-glycerol 3-phosphate pocket. Arginine 18 contacts ADP. The sn-glycerol 3-phosphate site is built by arginine 84, glutamate 85, tyrosine 136, and aspartate 245. 5 residues coordinate glycerol: arginine 84, glutamate 85, tyrosine 136, aspartate 245, and glutamine 246. ADP contacts are provided by threonine 267 and glycine 310. ATP contacts are provided by threonine 267, glycine 310, glutamine 314, and glycine 411. ADP contacts are provided by glycine 411 and asparagine 415.

Belongs to the FGGY kinase family.

The enzyme catalyses glycerol + ATP = sn-glycerol 3-phosphate + ADP + H(+). Its pathway is polyol metabolism; glycerol degradation via glycerol kinase pathway; sn-glycerol 3-phosphate from glycerol: step 1/1. Inhibited by fructose 1,6-bisphosphate (FBP). In terms of biological role, key enzyme in the regulation of glycerol uptake and metabolism. Catalyzes the phosphorylation of glycerol to yield sn-glycerol 3-phosphate. This is Glycerol kinase from Nitrosomonas eutropha (strain DSM 101675 / C91 / Nm57).